The sequence spans 452 residues: UDP-N-acetylmuramoylalanine--D-glutamate ligase (452 aa).

Residue 119-125 coordinates ATP; that stretch reads GSNGKTT.

Belongs to the MurCDEF family.

It localises to the cytoplasm. It carries out the reaction UDP-N-acetyl-alpha-D-muramoyl-L-alanine + D-glutamate + ATP = UDP-N-acetyl-alpha-D-muramoyl-L-alanyl-D-glutamate + ADP + phosphate + H(+). It functions in the pathway cell wall biogenesis; peptidoglycan biosynthesis. Cell wall formation. Catalyzes the addition of glutamate to the nucleotide precursor UDP-N-acetylmuramoyl-L-alanine (UMA). This chain is UDP-N-acetylmuramoylalanine--D-glutamate ligase, found in Streptococcus pyogenes serotype M28 (strain MGAS6180).